A 120-amino-acid polypeptide reads, in one-letter code: Ribonuclease P protein component (120 aa).

It belongs to the RnpA family. As to quaternary structure, consists of a catalytic RNA component (M1 or rnpB) and a protein subunit.

It carries out the reaction Endonucleolytic cleavage of RNA, removing 5'-extranucleotides from tRNA precursor.. In terms of biological role, RNaseP catalyzes the removal of the 5'-leader sequence from pre-tRNA to produce the mature 5'-terminus. It can also cleave other RNA substrates such as 4.5S RNA. The protein component plays an auxiliary but essential role in vivo by binding to the 5'-leader sequence and broadening the substrate specificity of the ribozyme. This Dehalococcoides mccartyi (strain ATCC BAA-2266 / KCTC 15142 / 195) (Dehalococcoides ethenogenes (strain 195)) protein is Ribonuclease P protein component.